The chain runs to 153 residues: Pheromone-binding protein Gp-9 (153 aa).

A signal peptide spans 1-19 (MKTFVLHIFIFALVAFASA). Intrachain disulfides connect C37–C77, C73–C129, and C118–C138.

The protein belongs to the PBP/GOBP family. In terms of assembly, homodimer.

The protein localises to the secreted. Functionally, colony queen number, a major feature of social organization, is associated with worker genotype for Gp-9. Colonies are headed by either a single reproductive queen (monogyne form) or multiple queens (polygyne form). Differences in worker Gp-9 genotypes between social forms may cause differences in workers' abilities to recognize queens and regulate their numbers. This Solenopsis tridens (Fire ant) protein is Pheromone-binding protein Gp-9.